We begin with the raw amino-acid sequence, 555 residues long: Transcription factor kojR (555 aa).

The zn(2)-C6 fungal-type DNA-binding region spans 21 to 47; sequence CETCKLRKRKCDGHEPCTYCLRYEYQC. A disordered region spans residues 51–73; it reads PHPRRKPAASKSSARPSEEEDSP.

The protein localises to the nucleus. Transcription factor that regulates the gene cluster that mediates the biosynthesis of 5-hydroxy-2-hydroxymethyl-1,4-pyrone, also know as kojic acid, a by-product in the fermentation process of malting rice that acts as a chelation agent. Negatively regulates the expression of the kojic acid-related protein kap1. Improves the antioxidant capacity via the accumulation of kojic acid that is also a strong oxidant. This Aspergillus oryzae (strain ATCC 42149 / RIB 40) (Yellow koji mold) protein is Transcription factor kojR.